Consider the following 171-residue polypeptide: Ribosome maturation factor RimM (171 aa).

One can recognise a PRC barrel domain in the interval 97 to 170 (EGEYYYHEII…LVTIHVMEGL (74 aa)).

This sequence belongs to the RimM family. Binds ribosomal protein uS19.

The protein localises to the cytoplasm. Its function is as follows. An accessory protein needed during the final step in the assembly of 30S ribosomal subunit, possibly for assembly of the head region. Essential for efficient processing of 16S rRNA. May be needed both before and after RbfA during the maturation of 16S rRNA. It has affinity for free ribosomal 30S subunits but not for 70S ribosomes. The polypeptide is Ribosome maturation factor RimM (Bacillus cereus (strain ZK / E33L)).